The primary structure comprises 61 residues: Weak toxin CM-2 (61 aa).

4 disulfides stabilise this stretch: C3–C21, C14–C37, C41–C53, and C54–C59.

The protein belongs to the three-finger toxin family. Short-chain subfamily. Orphan group VI sub-subfamily. Expressed by the venom gland.

The protein localises to the secreted. This chain is Weak toxin CM-2, found in Naja haje haje (Egyptian cobra).